The primary structure comprises 276 residues: Transmembrane protein 45B (276 aa).

The next 6 membrane-spanning stretches (helical) occupy residues 7-27 (HALP…KYPL), 48-68 (IIEA…EQFV), 95-115 (LFFA…HVPL), 147-167 (IHSL…VEVV), 181-201 (LLLL…PPFG), and 213-233 (IMFV…ILAA). 2 positions are modified to phosphoserine: Ser-271 and Ser-273.

The protein belongs to the TMEM45 family.

Its subcellular location is the endosome membrane. The protein resides in the lysosome membrane. The protein localises to the golgi apparatus. It localises to the trans-Golgi network membrane. Plays a role in innate immunity. The sequence is that of Transmembrane protein 45B (TMEM45B) from Bos taurus (Bovine).